A 1176-amino-acid chain; its full sequence is Pesticidal crystal protein Cry1Aa (1176 aa).

The protein belongs to the delta endotoxin family.

In terms of biological role, promotes colloidosmotic lysis by binding to the midgut epithelial cells of many lepidopteran larvae. This is Pesticidal crystal protein Cry1Aa (cry1Aa) from Bacillus thuringiensis subsp. aizawai.